The sequence spans 91 residues: MIVDIYRSAKKEGMYLYVPRNKALDELPEPLMKQFGRADHSMVLVLTPEKKLARASVEKVIESIENQGFYLQMPPPPESYMNEIPNDKMPR.

The 85-residue stretch at 1 to 85 (MIVDIYRSAK…PPESYMNEIP (85 aa)) folds into the YcgL domain. The tract at residues 72–91 (QMPPPPESYMNEIPNDKMPR) is disordered.

This Saccharophagus degradans (strain 2-40 / ATCC 43961 / DSM 17024) protein is YcgL domain-containing protein Sde_1339.